Reading from the N-terminus, the 252-residue chain is uncharacterized protein (252 aa).

28-35 contacts ATP; it reads GCDGTGKS.

It to E.coli YghS and YghT.

This is an uncharacterized protein from Escherichia coli O6:H1 (strain CFT073 / ATCC 700928 / UPEC).